Here is a 341-residue protein sequence, read N- to C-terminus: L-threonine 3-dehydrogenase (341 aa).

C38 contributes to the Zn(2+) binding site. Active-site charge relay system residues include T40 and H43. Positions 63, 64, 93, 96, 99, and 107 each coordinate Zn(2+). NAD(+) contacts are provided by residues I175, D195, R200, 262-264, and 286-287; these read LGI and IY.

Belongs to the zinc-containing alcohol dehydrogenase family. In terms of assembly, homotetramer. The cofactor is Zn(2+).

The protein resides in the cytoplasm. The enzyme catalyses L-threonine + NAD(+) = (2S)-2-amino-3-oxobutanoate + NADH + H(+). It participates in amino-acid degradation; L-threonine degradation via oxydo-reductase pathway; glycine from L-threonine: step 1/2. Its function is as follows. Catalyzes the NAD(+)-dependent oxidation of L-threonine to 2-amino-3-ketobutyrate. In Idiomarina loihiensis (strain ATCC BAA-735 / DSM 15497 / L2-TR), this protein is L-threonine 3-dehydrogenase.